The sequence spans 198 residues: Putative 3-methyladenine DNA glycosylase (198 aa).

It belongs to the DNA glycosylase MPG family.

This is Putative 3-methyladenine DNA glycosylase from Oceanobacillus iheyensis (strain DSM 14371 / CIP 107618 / JCM 11309 / KCTC 3954 / HTE831).